The sequence spans 479 residues: Ribulose bisphosphate carboxylase large chain (479 aa).

Positions Met1–Ser2 are excised as a propeptide. The residue at position 3 (Pro3) is an N-acetylproline. At Lys14 the chain carries N6,N6,N6-trimethyllysine. Substrate contacts are provided by Asn123 and Thr173. Catalysis depends on Lys175, which acts as the Proton acceptor. Substrate is bound at residue Lys177. 3 residues coordinate Mg(2+): Lys201, Asp203, and Glu204. An N6-carboxylysine modification is found at Lys201. The Proton acceptor role is filled by His294. Substrate contacts are provided by Arg295, His327, and Ser379.

It belongs to the RuBisCO large chain family. Type I subfamily. As to quaternary structure, heterohexadecamer of 8 large chains and 8 small chains; disulfide-linked. The disulfide link is formed within the large subunit homodimers. Requires Mg(2+) as cofactor. Post-translationally, the disulfide bond which can form in the large chain dimeric partners within the hexadecamer appears to be associated with oxidative stress and protein turnover.

It is found in the plastid. The protein resides in the chloroplast. It carries out the reaction 2 (2R)-3-phosphoglycerate + 2 H(+) = D-ribulose 1,5-bisphosphate + CO2 + H2O. The enzyme catalyses D-ribulose 1,5-bisphosphate + O2 = 2-phosphoglycolate + (2R)-3-phosphoglycerate + 2 H(+). In terms of biological role, ruBisCO catalyzes two reactions: the carboxylation of D-ribulose 1,5-bisphosphate, the primary event in carbon dioxide fixation, as well as the oxidative fragmentation of the pentose substrate in the photorespiration process. Both reactions occur simultaneously and in competition at the same active site. The chain is Ribulose bisphosphate carboxylase large chain from Ananas comosus (Pineapple).